The chain runs to 560 residues: Ubiquitin carboxyl-terminal hydrolase MINDY-3 homolog (560 aa).

The segment covering 1–13 has biased composition (basic and acidic residues); the sequence is MNEKIVREQRGGE. 2 disordered regions span residues 1–30 and 44–91; these read MNEK…AASA and SHKT…MLNA. 2 stretches are compositionally biased toward low complexity: residues 15 to 30 and 52 to 81; these read SPSS…AASA and TASS…SSSS. Catalysis depends on Cys-139, which acts as the Nucleophile. Residues 203 to 237 are disordered; sequence TEAGSTKKRSPAGEEESALAGQAAGSSEEVEEAAE. Phosphoserine is present on residues Ser-212 and Ser-219. His-403 serves as the catalytic Proton acceptor.

Belongs to the MINDY deubiquitinase family. FAM188 subfamily.

It carries out the reaction Thiol-dependent hydrolysis of ester, thioester, amide, peptide and isopeptide bonds formed by the C-terminal Gly of ubiquitin (a 76-residue protein attached to proteins as an intracellular targeting signal).. Functionally, hydrolase that can remove 'Lys-48'-linked conjugated ubiquitin from proteins. This is Ubiquitin carboxyl-terminal hydrolase MINDY-3 homolog (mindy3) from Drosophila melanogaster (Fruit fly).